Consider the following 454-residue polypeptide: MPRMFGTDGVRGLANRDLTAQLALDLGDAAVRVLGDDGGRETNRHRALIGRDTRVSGDFLSHALAAGMSAGGFDVIDAGIIPTPGVAFLTSVLNVEMGAVISASHNPMPDNGIKFFARGGFKLPDTKEDEIEAVLGQDWERPTGAGVGRVSHDTTTATNLYIDHLVSAIAPEGNEQPLKGLKVVADCANGATSVVAPEALRRAGADVIVINASPDGYNINKNAGSTHPESMQAMVRASGADLGVAFDGDADRCLAADAEGNMVNGDQIMGILARAKKREGKLNHDTLVVTVMSNLGLKLALKEMGIDTVQTNVGDRYVLEEMLRGDYSLGGEQSGHVINREFATTGDGTLTALTLCNEVVKSGKSLKELAADFPQLPQQLINVPNVDKMAAKTNKAVLEAVAREEELLGDTGRVLLRPSGTEPLVRVMAEAATQEQADEVTARLAQIVADELAL.

Ser-104 functions as the Phosphoserine intermediate in the catalytic mechanism. Mg(2+) is bound by residues Ser-104, Asp-247, Asp-249, and Asp-251. Ser-104 carries the phosphoserine modification.

It belongs to the phosphohexose mutase family. It depends on Mg(2+) as a cofactor. In terms of processing, activated by phosphorylation.

The catalysed reaction is alpha-D-glucosamine 1-phosphate = D-glucosamine 6-phosphate. Its function is as follows. Catalyzes the conversion of glucosamine-6-phosphate to glucosamine-1-phosphate. This Bifidobacterium animalis subsp. lactis (strain AD011) protein is Phosphoglucosamine mutase.